An 84-amino-acid chain; its full sequence is Small ribosomal subunit protein uS17 (84 aa).

Belongs to the universal ribosomal protein uS17 family. As to quaternary structure, part of the 30S ribosomal subunit.

Its function is as follows. One of the primary rRNA binding proteins, it binds specifically to the 5'-end of 16S ribosomal RNA. In Shigella boydii serotype 18 (strain CDC 3083-94 / BS512), this protein is Small ribosomal subunit protein uS17.